We begin with the raw amino-acid sequence, 325 residues long: Apoptosis-enhancing nuclease (325 aa).

A Nucleolar localization signal motif is present at residues 27-35 (RKRHKRRSR). Residues 53 to 105 (LSMPPEPGSSPLPTPFGAVTATEDASSGKQCPRAGSGGAPCSRRPAPGKASGP) form a disordered region. Over residues 56–66 (PPEPGSSPLPT) the composition is skewed to pro residues. Residues 110 to 266 (CVAIDCEMVG…EDATTAMELY (157 aa)) form the Exonuclease domain. A Nuclear localization signal motif is present at residues 165-188 (RQHMCKAIPFQVAQKEILKLLKGK). The segment at 281–325 (LWTCPEDREPDSSTDMEQYMEDQYWPDDLAHGSRGGAREAQDRRN) is disordered. Residues 308-325 (DLAHGSRGGAREAQDRRN) show a composition bias toward basic and acidic residues.

It localises to the nucleus. It is found in the nucleolus. In terms of biological role, exonuclease with activity against single- and double-stranded DNA and RNA. Mediates p53-induced apoptosis. When induced by p53 following DNA damage, digests double-stranded DNA to form single-stranded DNA and amplifies DNA damage signals, leading to enhancement of apoptosis. The chain is Apoptosis-enhancing nuclease (AEN) from Pongo abelii (Sumatran orangutan).